The following is a 116-amino-acid chain: Ribulose bisphosphate carboxylase small subunit 1 (116 aa).

It belongs to the RuBisCO small chain family. As to quaternary structure, heterohexadecamer of 8 large and 8 small subunits.

The protein localises to the cytoplasm. RuBisCO catalyzes two reactions: the carboxylation of D-ribulose 1,5-bisphosphate, the primary event in carbon dioxide fixation, as well as the oxidative fragmentation of the pentose substrate. Both reactions occur simultaneously and in competition at the same active site. Although the small subunit is not catalytic it is essential for maximal activity. Its function is as follows. Can replace the endogenous type I ccbS gene in H.neapolitanus, reconstituting RuBisCO with about 10% of normal activity; the active enzyme is targeted to carboxysomes. This is Ribulose bisphosphate carboxylase small subunit 1 from Hydrogenovibrio crunogenus (strain DSM 25203 / XCL-2) (Thiomicrospira crunogena).